The chain runs to 315 residues: FAD-linked oxidoreductase sthB (315 aa).

Residues 19–201 (QPCSLGNYVS…LSMTSRVHAD (183 aa)) enclose the FAD-binding PCMH-type domain.

The protein belongs to the oxygen-dependent FAD-linked oxidoreductase family.

The catalysed reaction is betaenone C = betaenone A. The enzyme catalyses stemphyloxin I = stemphyloxin II. Its pathway is mycotoxin biosynthesis. FAD-linked oxidoreductase; part of the gene cluster that mediates the biosynthesis of the phytotoxin stemphyloxin II. The first step of the pathway is the synthesis of dehydroprobetaenone I by the polyketide synthase sthA and the enoyl reductase sthE via condensation of one acetyl-CoA starter unit with 7 malonyl-CoA units and 5 methylations. The C-terminal reductase (R) domain of sthA catalyzes the reductive release of the polyketide chain. Because sthA lacks a designated enoylreductase (ER) domain, the required activity is provided the enoyl reductase sthE. The short-chain dehydrogenase/reductase sthC then catalyzes reduction of dehydroprobetaenone I to probetaenone I. The cytochrome P450 monooxygenase sthF catalyzes successive epoxidation, oxidation (resulting from epoxide opening) and hydroxylation to install a tertiary alcohol in the decaline ring to yield betaenone C from dehydroprobetaenone I and betaenone B from probetaenone I. The FAD-linked oxidoreductase sthB is responsible for the conversion of betaenone C to betaenone A via an intramolecular aldol reaction between C-1 and C-17 to form the bridged tricyclic system in betaenone A. Finally, the cytochrome P450 monooxygenase sthD catalyzes the hydroxylation of C-15 to afford the final metabolite stemphyloxin II. The sequence is that of FAD-linked oxidoreductase sthB from Phaeosphaeria nodorum (strain SN15 / ATCC MYA-4574 / FGSC 10173) (Glume blotch fungus).